The chain runs to 1465 residues: DNA polymerase III PolC-type (1465 aa).

The Exonuclease domain occupies 431–583 (DVETTGLSAM…YDAEATGRLL (153 aa)).

It belongs to the DNA polymerase type-C family. PolC subfamily.

The protein resides in the cytoplasm. The catalysed reaction is DNA(n) + a 2'-deoxyribonucleoside 5'-triphosphate = DNA(n+1) + diphosphate. In terms of biological role, required for replicative DNA synthesis. This DNA polymerase also exhibits 3' to 5' exonuclease activity. This is DNA polymerase III PolC-type from Streptococcus pyogenes.